We begin with the raw amino-acid sequence, 458 residues long: Vacuolar basic amino acid transporter 3 (458 aa).

Over 1–9 (MNMLIVGRV) the chain is Cytoplasmic. A helical transmembrane segment spans residues 10-30 (VASVGGSGLQTLCFVIGCTMV). The Vacuolar portion of the chain corresponds to 31–36 (GERSRP). Residues 37–57 (LVISILSCAFAVAAIVGPIIG) traverse the membrane as a helical segment. The Cytoplasmic portion of the chain corresponds to 58 to 67 (GAFTTHVTWR). The chain crosses the membrane as a helical span at residues 68–88 (WCFYINLPIGGLAIIMFLLTY). Residues 89–132 (KAENKGILQQIKDAIGTISSFTFSKFRHQVNFKRLMNGIIFKFD) are Vacuolar-facing. The helical transmembrane segment at 133-153 (FFGFALCSAGLVLFLLGLTFG) threads the bilayer. The Cytoplasmic portion of the chain corresponds to 154 to 163 (GNKYSWNSGQ). The chain crosses the membrane as a helical span at residues 164 to 184 (VIAYLVLGVLLFIFSLVYDFF). The Vacuolar segment spans residues 185–205 (LFDKFNPEPDNISYRPLLLRR). Residue Asn-195 is glycosylated (N-linked (GlcNAc...) asparagine). Residues 206 to 226 (LVAKPAIIIINMVTFLLCTGY) form a helical membrane-spanning segment. Over 227–248 (NGQMIYSVQFFQLIFASSAWKA) the chain is Cytoplasmic. A helical membrane pass occupies residues 249–269 (GLHLIPIVITNVIAAIASGVI). Over 270 to 277 (TKKLGLVK) the chain is Vacuolar. Residues 278-298 (PLLIFGGVLGVIGAGLMTLMT) form a helical membrane-spanning segment. Topologically, residues 299–306 (NTSTKSTQ) are cytoplasmic. A helical transmembrane segment spans residues 307 to 327 (IGVLLLPGFSLGFALQASLMS). The Vacuolar portion of the chain corresponds to 328–415 (AQLQITKDRP…STIGNILSDS (88 aa)). Residues 416 to 436 (IKNVFWMDLGFYALGFLFCSF) traverse the membrane as a helical segment. At 437–458 (SSNKKLIIPKKDETPEDNLEDK) the chain is on the cytoplasmic side.

Belongs to the major facilitator superfamily.

It localises to the vacuole membrane. Functionally, transporter required for vacuolar uptake of histidine and lysine. In Saccharomyces cerevisiae (strain ATCC 204508 / S288c) (Baker's yeast), this protein is Vacuolar basic amino acid transporter 3 (VBA3).